We begin with the raw amino-acid sequence, 454 residues long: Bifunctional protein GlmU (454 aa).

Positions 1-226 (MALNVVILAA…AVEVEGANNR (226 aa)) are pyrophosphorylase. Residues 8–11 (LAAG), Lys22, Gln73, 78–79 (GT), 100–102 (YGD), Gly137, Glu151, Asn166, and Asn224 each bind UDP-N-acetyl-alpha-D-glucosamine. Asp102 serves as a coordination point for Mg(2+). Asn224 lines the Mg(2+) pocket. Positions 227 to 247 (VQLAQLERAYQARAAEKLMLE) are linker. The segment at 248-454 (GANLRDPARI…GWPRPVKLKK (207 aa)) is N-acetyltransferase. UDP-N-acetyl-alpha-D-glucosamine-binding residues include Arg330 and Lys348. The active-site Proton acceptor is the His360. Tyr363 and Asn374 together coordinate UDP-N-acetyl-alpha-D-glucosamine. Residues Ala377, 383–384 (NY), Ser402, Ala420, and Arg437 each bind acetyl-CoA.

The protein in the N-terminal section; belongs to the N-acetylglucosamine-1-phosphate uridyltransferase family. This sequence in the C-terminal section; belongs to the transferase hexapeptide repeat family. In terms of assembly, homotrimer. Requires Mg(2+) as cofactor.

The protein localises to the cytoplasm. It catalyses the reaction alpha-D-glucosamine 1-phosphate + acetyl-CoA = N-acetyl-alpha-D-glucosamine 1-phosphate + CoA + H(+). The catalysed reaction is N-acetyl-alpha-D-glucosamine 1-phosphate + UTP + H(+) = UDP-N-acetyl-alpha-D-glucosamine + diphosphate. It participates in nucleotide-sugar biosynthesis; UDP-N-acetyl-alpha-D-glucosamine biosynthesis; N-acetyl-alpha-D-glucosamine 1-phosphate from alpha-D-glucosamine 6-phosphate (route II): step 2/2. Its pathway is nucleotide-sugar biosynthesis; UDP-N-acetyl-alpha-D-glucosamine biosynthesis; UDP-N-acetyl-alpha-D-glucosamine from N-acetyl-alpha-D-glucosamine 1-phosphate: step 1/1. The protein operates within bacterial outer membrane biogenesis; LPS lipid A biosynthesis. Its function is as follows. Catalyzes the last two sequential reactions in the de novo biosynthetic pathway for UDP-N-acetylglucosamine (UDP-GlcNAc). The C-terminal domain catalyzes the transfer of acetyl group from acetyl coenzyme A to glucosamine-1-phosphate (GlcN-1-P) to produce N-acetylglucosamine-1-phosphate (GlcNAc-1-P), which is converted into UDP-GlcNAc by the transfer of uridine 5-monophosphate (from uridine 5-triphosphate), a reaction catalyzed by the N-terminal domain. The protein is Bifunctional protein GlmU of Shewanella pealeana (strain ATCC 700345 / ANG-SQ1).